Reading from the N-terminus, the 308-residue chain is 4-diphosphocytidyl-2-C-methyl-D-erythritol kinase (308 aa).

K23 is an active-site residue. Residue 108–118 (PVAAGIGGGSA) participates in ATP binding. D150 is an active-site residue.

Belongs to the GHMP kinase family. IspE subfamily.

The enzyme catalyses 4-CDP-2-C-methyl-D-erythritol + ATP = 4-CDP-2-C-methyl-D-erythritol 2-phosphate + ADP + H(+). It functions in the pathway isoprenoid biosynthesis; isopentenyl diphosphate biosynthesis via DXP pathway; isopentenyl diphosphate from 1-deoxy-D-xylulose 5-phosphate: step 3/6. Functionally, catalyzes the phosphorylation of the position 2 hydroxy group of 4-diphosphocytidyl-2C-methyl-D-erythritol. In Nitrobacter winogradskyi (strain ATCC 25391 / DSM 10237 / CIP 104748 / NCIMB 11846 / Nb-255), this protein is 4-diphosphocytidyl-2-C-methyl-D-erythritol kinase.